The chain runs to 478 residues: Divinyl ether synthase CYP74D1 (478 aa).

Residue cysteine 431 coordinates heme.

Belongs to the cytochrome P450 family. 9-divinyl ether synthase subfamily. As to expression, expressed in roots. Detected in stems, but not in flower buds, petioles, cotyledons or leaves.

It carries out the reaction (9S)-hydroperoxy-(10E,12Z)-octadecadienoate = colneleate + H2O. It catalyses the reaction (9S)-hydroperoxy-(10E,12Z,15Z)-octadecatrienoate = colnelenate + H2O. Involved in the biosynthesis of the anti-fungal toxins colneleate and colnelenate. Can use (9S)-hydroperoxy-(10E,12Z)-octadecadienoate (9-HPOD) and (9S)-hydroperoxy-(10E,12Z,15Z)-octadecatrienoate (9-HPOT) as substrates, but has a very low activity with the corresponding 13-hydroperoxides (13-HPOD and 13-POT). The chain is Divinyl ether synthase CYP74D1 from Solanum lycopersicum (Tomato).